Consider the following 340-residue polypeptide: Deubiquitinase SseL (340 aa).

H223 is a catalytic residue. The active-site Nucleophile is the C285.

Belongs to the peptidase C79 family.

Its subcellular location is the secreted. It is found in the host cytoplasm. In terms of biological role, effector proteins function to alter host cell physiology and promote bacterial survival in host tissues. This protease targets the host cell ubiquitin pathway by acting as a deubiquitinase in infected host cells. The sequence is that of Deubiquitinase SseL (sseL) from Salmonella paratyphi A (strain ATCC 9150 / SARB42).